A 161-amino-acid polypeptide reads, in one-letter code: SsrA-binding protein (161 aa).

This sequence belongs to the SmpB family.

The protein resides in the cytoplasm. In terms of biological role, required for rescue of stalled ribosomes mediated by trans-translation. Binds to transfer-messenger RNA (tmRNA), required for stable association of tmRNA with ribosomes. tmRNA and SmpB together mimic tRNA shape, replacing the anticodon stem-loop with SmpB. tmRNA is encoded by the ssrA gene; the 2 termini fold to resemble tRNA(Ala) and it encodes a 'tag peptide', a short internal open reading frame. During trans-translation Ala-aminoacylated tmRNA acts like a tRNA, entering the A-site of stalled ribosomes, displacing the stalled mRNA. The ribosome then switches to translate the ORF on the tmRNA; the nascent peptide is terminated with the 'tag peptide' encoded by the tmRNA and targeted for degradation. The ribosome is freed to recommence translation, which seems to be the essential function of trans-translation. This is SsrA-binding protein from Mycolicibacterium smegmatis (strain ATCC 700084 / mc(2)155) (Mycobacterium smegmatis).